The following is a 309-amino-acid chain: MTIITEKIAVLLGGTSQERNISLISGYNILNSLLKSGIHAVAIDTKDFPITQLPHQKFTKAFIALHGRDGEDGTIQSVLKYLNIPFTGSKTLPSAISINKFKTKLLWQSFNLPVVPYLHINKHEFNKKFLQKFKKNISLLGLPIIVKPNQEGSSIGITIVYSYETLYKACKTAFIFDNSILIEKFIYGEEYTISILGKKILPIIRICPENTFYNYNSKYLSNRTTYFCPSGLNKLKELELKKITLTAWNIIDGTGWGRVDVIMDYKNKFWLLEANTCPGMTDHSLFPMSAKKAGISYQILVQKILELAN.

The ATP-grasp domain occupies 104-306 (KLLWQSFNLP…YQILVQKILE (203 aa)). Position 137-192 (137-192 (ISLLGLPIIVKPNQEGSSIGITIVYSYETLYKACKTAFIFDNSILIEKFIYGEEYT)) interacts with ATP. Mg(2+)-binding residues include Asp260, Glu273, and Asn275.

The protein belongs to the D-alanine--D-alanine ligase family. Requires Mg(2+) as cofactor. It depends on Mn(2+) as a cofactor.

It is found in the cytoplasm. The catalysed reaction is 2 D-alanine + ATP = D-alanyl-D-alanine + ADP + phosphate + H(+). It participates in cell wall biogenesis; peptidoglycan biosynthesis. In terms of biological role, cell wall formation. The chain is D-alanine--D-alanine ligase from Buchnera aphidicola subsp. Baizongia pistaciae (strain Bp).